We begin with the raw amino-acid sequence, 107 residues long: ATPase inhibitor, mitochondrial (107 aa).

The N-terminal 25 residues, 1 to 25 (MAGSALAVRARLGVWGMRVLQTRGF), are a transit peptide targeting the mitochondrion. Residues 25–58 (FGSDSSESMDSGAGSIREAGGAFGKREKAEEDRY) are disordered. The N-terminal inhibitory region stretch occupies residues 26 to 52 (GSDSSESMDSGAGSIREAGGAFGKREK). A Phosphoserine modification is found at serine 39. Positions 48-58 (GKREKAEEDRY) are enriched in basic and acidic residues. Positions 60–107 (REKTREQLAALKKHHEDEIDHHSKEIERLQKQIERHKKKIKYLKNSEH) form a coiled coil. The tract at residues 74 to 106 (HEDEIDHHSKEIERLQKQIERHKKKIKYLKNSE) is antiparallel alpha-helical coiled coil region. N6-succinyllysine is present on lysine 103.

It belongs to the ATPase inhibitor family. Homodimer; represents the active form and is present at a pH value below 6.5. Homotetramer; represents the inactive form and is present at a pH value above 7.0.

The protein resides in the mitochondrion. In terms of biological role, endogenous F(1)F(o)-ATPase inhibitor limiting ATP depletion when the mitochondrial membrane potential falls below a threshold and the F(1)F(o)-ATP synthase starts hydrolyzing ATP to pump protons out of the mitochondrial matrix. Required to avoid the consumption of cellular ATP when the F(1)F(o)-ATP synthase enzyme acts as an ATP hydrolase. Indirectly acts as a regulator of heme synthesis in erythroid tissues: regulates heme synthesis by modulating the mitochondrial pH and redox potential, allowing FECH to efficiently catalyze the incorporation of iron into protoporphyrin IX to produce heme. This is ATPase inhibitor, mitochondrial from Rattus norvegicus (Rat).